A 397-amino-acid chain; its full sequence is Lysophospholipid transporter LplT (397 aa).

Residues 1 to 17 (MSESVHTNTSLWSKGMK) lie on the Periplasmic side of the membrane. Residues 18–38 (AVIVAQFLSAFGDNALLFATL) traverse the membrane as a helical segment. Residues 39 to 52 (ALLKAQFYPEWSQP) are Cytoplasmic-facing. The chain crosses the membrane as a helical span at residues 53-73 (VLQMVFVGAYILFAPFVGQVA). The Periplasmic segment spans residues 74-90 (DSFAKGRVMMFANGLKL). A helical transmembrane segment spans residues 91–111 (LGAASICFGFNPFVGYTLVGI). The Cytoplasmic segment spans residues 112–144 (GAAAYSPAKYGILGELTTGDKLVKANGLMEAST). The chain crosses the membrane as a helical span at residues 145–165 (IAAILLGSVAGGVLADLHVLV). Residue A166 is a topological domain, periplasmic. The chain crosses the membrane as a helical span at residues 167–187 (LAACALAYAGAVAANIYIPKL). Over 188–226 (AAARPGQSWNVLKMTCSFKSACTSLWQNGETRFSLVGTS) the chain is Cytoplasmic. The chain crosses the membrane as a helical span at residues 227 to 247 (LFWGAGVTLRFLLVLWVPVAL). Residues 248–256 (GITDNATPT) are Periplasmic-facing. Residues 257-277 (YLNAMVAIGIVLGAGAAAKLV) traverse the membrane as a helical segment. At 278–280 (TLE) the chain is on the cytoplasmic side. The helical transmembrane segment at 281–301 (TVSRCMPAGILIGVVVLFFSL) threads the bilayer. At 302–304 (QHE) the chain is on the periplasmic side. A helical membrane pass occupies residues 305–325 (LLPAYALLMLIGVLGGFFVVP). Topologically, residues 326–343 (LNALLQERGKKSVGAGNA) are cytoplasmic. A helical transmembrane segment spans residues 344–364 (IAVQNLGENSAMLLMLGIYSL). Residues 365–366 (AV) are Periplasmic-facing. Residues 367 to 387 (LVGIPVVPIGIGFGTLFALAI) traverse the membrane as a helical segment. Topologically, residues 388–397 (TALWIWQRRH) are cytoplasmic.

Belongs to the major facilitator superfamily. LplT (TC 2.A.1.42) family.

The protein resides in the cell inner membrane. Functionally, catalyzes the facilitated diffusion of 2-acyl-glycero-3-phosphoethanolamine (2-acyl-GPE) into the cell. The chain is Lysophospholipid transporter LplT from Escherichia fergusonii (strain ATCC 35469 / DSM 13698 / CCUG 18766 / IAM 14443 / JCM 21226 / LMG 7866 / NBRC 102419 / NCTC 12128 / CDC 0568-73).